The chain runs to 133 residues: MENQTMSNNIPTELKYVASHEWLRLEEDGTITVGITHHAQELLGDIVFVELPEVGANLAAEEQSGVVESVKAASDVYAPIAGEVVAVNDDLPGAPETANSDPYGAGWFFKIKPANPADYDGLLTAEQYAGEVD.

The Lipoyl-binding domain maps to 30–112 (TITVGITHHA…YGAGWFFKIK (83 aa)). At lysine 71 the chain carries N6-lipoyllysine.

It belongs to the GcvH family. The glycine cleavage system is composed of four proteins: P, T, L and H. (R)-lipoate is required as a cofactor.

Its function is as follows. The glycine cleavage system catalyzes the degradation of glycine. The H protein shuttles the methylamine group of glycine from the P protein to the T protein. The protein is Glycine cleavage system H protein of Neisseria gonorrhoeae (strain ATCC 700825 / FA 1090).